A 144-amino-acid polypeptide reads, in one-letter code: MPLVYFDASAFVKLLTTETGSSLASALWDGCDAALSSRLAYPEVRAALAAAARNHDLTESELADAERDWEDFWAATRPVELTATVEQHAGHLARAHALRGADAVHLASALAVGDPGLVVAVWDRRLHTGAHAAGCRVAPAQLDP.

Mg(2+)-binding residues include Asp7 and Asp102.

Belongs to the PINc/VapC protein family. It depends on Mg(2+) as a cofactor.

Functionally, toxic component of a type II toxin-antitoxin (TA) system. An RNase. Its cognate antitoxin is VapB45. This is Ribonuclease VapC45 from Mycobacterium tuberculosis (strain CDC 1551 / Oshkosh).